The sequence spans 143 residues: Small ribosomal subunit protein uS12B (143 aa).

Position 62 is a 3,4-dihydroxyproline (Pro62).

Belongs to the universal ribosomal protein uS12 family. Component of the small ribosomal subunit (SSU). Mature yeast ribosomes consist of a small (40S) and a large (60S) subunit. The 40S small subunit contains 1 molecule of ribosomal RNA (18S rRNA) and at least 33 different proteins. The large 60S subunit contains 3 rRNA molecules (25S, 5.8S and 5S rRNA) and at least 46 different proteins. Hydroxylation at Pro-62 affects translation termination efficiency.

The protein localises to the cytoplasm. The protein resides in the nucleus. It localises to the nucleolus. Its function is as follows. Component of the ribosome, a large ribonucleoprotein complex responsible for the synthesis of proteins in the cell. The small ribosomal subunit (SSU) binds messenger RNAs (mRNAs) and translates the encoded message by selecting cognate aminoacyl-transfer RNA (tRNA) molecules. The large subunit (LSU) contains the ribosomal catalytic site termed the peptidyl transferase center (PTC), which catalyzes the formation of peptide bonds, thereby polymerizing the amino acids delivered by tRNAs into a polypeptide chain. The nascent polypeptides leave the ribosome through a tunnel in the LSU and interact with protein factors that function in enzymatic processing, targeting, and the membrane insertion of nascent chains at the exit of the ribosomal tunnel. This chain is Small ribosomal subunit protein uS12B (rps2302), found in Schizosaccharomyces pombe (strain 972 / ATCC 24843) (Fission yeast).